We begin with the raw amino-acid sequence, 360 residues long: Lipid-A-disaccharide synthase (360 aa).

It belongs to the LpxB family.

The enzyme catalyses a lipid X + a UDP-2-N,3-O-bis[(3R)-3-hydroxyacyl]-alpha-D-glucosamine = a lipid A disaccharide + UDP + H(+). The protein operates within bacterial outer membrane biogenesis; LPS lipid A biosynthesis. In terms of biological role, condensation of UDP-2,3-diacylglucosamine and 2,3-diacylglucosamine-1-phosphate to form lipid A disaccharide, a precursor of lipid A, a phosphorylated glycolipid that anchors the lipopolysaccharide to the outer membrane of the cell. This is Lipid-A-disaccharide synthase from Helicobacter pylori (strain P12).